The primary structure comprises 556 residues: Formate--tetrahydrofolate ligase (556 aa).

65–72 (TPAGEGKS) contributes to the ATP binding site.

Belongs to the formate--tetrahydrofolate ligase family.

It catalyses the reaction (6S)-5,6,7,8-tetrahydrofolate + formate + ATP = (6R)-10-formyltetrahydrofolate + ADP + phosphate. Its pathway is one-carbon metabolism; tetrahydrofolate interconversion. The protein is Formate--tetrahydrofolate ligase of Streptococcus pneumoniae (strain Taiwan19F-14).